The following is a 285-amino-acid chain: Small ribosomal subunit biogenesis GTPase RsgA (285 aa).

Residues 56–217 (DNLLIRPIVA…IIDTPGFSSI (162 aa)) enclose the CP-type G domain. Residues 105–108 (NKID) and 159–167 (GPSGVGKSS) contribute to the GTP site. Zn(2+) is bound by residues C241, C246, H248, and C254.

The protein belongs to the TRAFAC class YlqF/YawG GTPase family. RsgA subfamily. Monomer. Associates with 30S ribosomal subunit, binds 16S rRNA. The cofactor is Zn(2+).

The protein resides in the cytoplasm. One of several proteins that assist in the late maturation steps of the functional core of the 30S ribosomal subunit. Helps release RbfA from mature subunits. May play a role in the assembly of ribosomal proteins into the subunit. Circularly permuted GTPase that catalyzes slow GTP hydrolysis, GTPase activity is stimulated by the 30S ribosomal subunit. The chain is Small ribosomal subunit biogenesis GTPase RsgA from Fusobacterium nucleatum subsp. nucleatum (strain ATCC 25586 / DSM 15643 / BCRC 10681 / CIP 101130 / JCM 8532 / KCTC 2640 / LMG 13131 / VPI 4355).